Here is a 284-residue protein sequence, read N- to C-terminus: MDLSRINTWKSKQLKSFLSSKDAFKADINGHSVLYYAIADNNVRLVCTLLNAGALKNLLDNEFPLHQAATLEDTKIVKILLFSGMDDSQFDDKGNTALYYAVDSGNMQTVKLFVKKNWRLMFYGKTGWKTSFYHAVMLNDVSIVSYFLSEIPSPFDLAILLSCIHTTIKNGHVDMMILLLDYMTSTNTNSLLFIPDIKLAIDNKDIEMLQALFKYDINIYSVNLENVLLDDAEIAKMIIEKHVEYKSDSYTKDLDDVKNNKLDEIISKNEELRLMYVNCVRKNY.

ANK repeat units lie at residues 29-58 (NGHS…LKNL), 60-89 (DNEF…DDSQ), 93-122 (KGNT…RLMF), 127-157 (GWKT…PFDL), 159-188 (ILLS…STNT), and 192-221 (LFIP…NIYS).

Belongs to the orthopoxvirus OPG039 family.

It localises to the host cytoplasm. The protein resides in the host nucleus. In terms of biological role, inhibits antiviral activity induced by type I interferons. Does not block signal transduction of IFN, but is important to counter the host antiviral state induced by a pre-treatment with IFN. Plays a role in the inhibition of host NF-kappa-B activation by preventing the acetylation of the RELA/p65 subunit of NF-kappaB. The polypeptide is Interferon antagonist OPG039 (OPG039) (Cynomys gunnisoni (Gunnison's prairie dog)).